A 325-amino-acid polypeptide reads, in one-letter code: 2-dehydro-3-deoxygluconokinase (325 aa).

Residues G49–N53, Y105, Y121–R123, and R181 each bind substrate. ATP-binding positions include N179–R181, K240–G245, and G269–D272. The substrate site is built by D272 and D308. D272 (proton acceptor) is an active-site residue.

It belongs to the carbohydrate kinase PfkB family. As to quaternary structure, homohexamer; trimer of dimers.

The catalysed reaction is 2-dehydro-3-deoxy-D-gluconate + ATP = 2-dehydro-3-deoxy-6-phospho-D-gluconate + ADP + H(+). It participates in carbohydrate acid metabolism; 2-dehydro-3-deoxy-D-gluconate degradation; D-glyceraldehyde 3-phosphate and pyruvate from 2-dehydro-3-deoxy-D-gluconate: step 1/2. Involved in the degradation of glucose via the semi-phosphorylative Entner-Doudoroff pathway. Catalyzes the phosphorylation of 2-keto-3-deoxygluconate (KDG) yielding 2-keto-3-deoxy-6-phosphogluconate (KDPG). This chain is 2-dehydro-3-deoxygluconokinase (kdgK), found in Thermoproteus tenax.